A 355-amino-acid polypeptide reads, in one-letter code: Putative inositol monophosphatase 3 (355 aa).

Residues 16-36 (VPATIFAILLTIVLVYFLNFH) traverse the membrane as a helical segment. Positions 127, 167, 169, 170, and 292 each coordinate Mg(2+). Substrate is bound at residue E127. Residues 169 to 172 (LDAT) and D292 contribute to the substrate site.

It belongs to the inositol monophosphatase superfamily. Mg(2+) is required as a cofactor.

The protein localises to the membrane. It carries out the reaction a myo-inositol phosphate + H2O = myo-inositol + phosphate. It functions in the pathway polyol metabolism; myo-inositol biosynthesis; myo-inositol from D-glucose 6-phosphate: step 2/2. This Drosophila pseudoobscura pseudoobscura (Fruit fly) protein is Putative inositol monophosphatase 3.